Here is a 40-residue protein sequence, read N- to C-terminus: Photosystem I reaction center subunit IX (40 aa).

The helical transmembrane segment at 4 to 24 (FFESWPMAAVLWVWLTAGIIV) threads the bilayer.

This sequence belongs to the PsaJ family.

It localises to the cellular thylakoid membrane. In terms of biological role, may help in the organization of the PsaE and PsaF subunits. This Prochlorococcus marinus (strain MIT 9313) protein is Photosystem I reaction center subunit IX.